A 276-amino-acid polypeptide reads, in one-letter code: NADPH-dependent 7-cyano-7-deazaguanine reductase (276 aa).

83–85 (IES) contributes to the substrate binding site. An NADPH-binding site is contributed by 85 to 86 (SK). Cysteine 184 (thioimide intermediate) is an active-site residue. The Proton donor role is filled by aspartate 191. Residue 223–224 (HE) participates in substrate binding. Residue 252–253 (RG) coordinates NADPH.

The protein belongs to the GTP cyclohydrolase I family. QueF type 2 subfamily. As to quaternary structure, homodimer.

The protein localises to the cytoplasm. The catalysed reaction is 7-aminomethyl-7-carbaguanine + 2 NADP(+) = 7-cyano-7-deazaguanine + 2 NADPH + 3 H(+). It participates in tRNA modification; tRNA-queuosine biosynthesis. Catalyzes the NADPH-dependent reduction of 7-cyano-7-deazaguanine (preQ0) to 7-aminomethyl-7-deazaguanine (preQ1). The sequence is that of NADPH-dependent 7-cyano-7-deazaguanine reductase from Ectopseudomonas mendocina (strain ymp) (Pseudomonas mendocina).